The chain runs to 292 residues: Elongation factor Ts (292 aa).

The tract at residues 80–83 (TDSV) is involved in Mg(2+) ion dislocation from EF-Tu.

The protein belongs to the EF-Ts family.

Its subcellular location is the cytoplasm. Its function is as follows. Associates with the EF-Tu.GDP complex and induces the exchange of GDP to GTP. It remains bound to the aminoacyl-tRNA.EF-Tu.GTP complex up to the GTP hydrolysis stage on the ribosome. The chain is Elongation factor Ts from Lactiplantibacillus plantarum (strain ATCC BAA-793 / NCIMB 8826 / WCFS1) (Lactobacillus plantarum).